Consider the following 223-residue polypeptide: Glutathione S-transferase 4 (223 aa).

Blocked amino end (Ala) is present on Ala-2. Positions 4-85 (PAVKVYGWAI…HVLRKHKPEL (82 aa)) constitute a GST N-terminal domain. Residues Ser-14, 43–44 (HR), 56–57 (KV), and 69–70 (ES) each bind glutathione. One can recognise a GST C-terminal domain in the interval 90 to 223 (RLEQTAMVDV…VGAGAPKEQE (134 aa)).

It belongs to the GST superfamily. Phi family. Homodimer or heterodimer of GST-I and GST-IV (=GST-II). Seedling roots.

It carries out the reaction RX + glutathione = an S-substituted glutathione + a halide anion + H(+). Conjugation of reduced glutathione to a wide number of exogenous and endogenous hydrophobic electrophiles. Involved in the detoxification of certain herbicides. Most active with substrates possessing a chloroacetamide structure. Trans-cinnamic acid and 1-chloro-2,4-dinitrobenzene are not effective substrates. May play an important role in the benoxacor-mediated protection of maize from metolachlor injury. This chain is Glutathione S-transferase 4 (GST4), found in Zea mays (Maize).